Consider the following 425-residue polypeptide: cAMP/cGMP-dependent 3',5'-cAMP/cGMP phosphodiesterase 7 (425 aa).

An N-terminal signal peptide occupies residues 1-17; it reads MKYLILILIFFIEINNG.

The protein belongs to the cyclic nucleotide phosphodiesterase class-II family.

It is found in the secreted. It localises to the extracellular space. Its subcellular location is the cell surface. It catalyses the reaction 3',5'-cyclic AMP + H2O = AMP + H(+). The enzyme catalyses 3',5'-cyclic GMP + H2O = GMP + H(+). Inhibited by dithiotreitol (DTT). In terms of biological role, phosphodiesterase with dual cAMP/cGMP specificity. However, displays a preference for cAMP over cGMP. Seems to regulate cAMP/cGMP concentration especially during cell aggregation. This is cAMP/cGMP-dependent 3',5'-cAMP/cGMP phosphodiesterase 7 (pde7) from Dictyostelium discoideum (Social amoeba).